A 79-amino-acid polypeptide reads, in one-letter code: ATP synthase subunit c (79 aa).

The next 2 helical transmembrane spans lie at Ile11 to Leu31 and Leu59 to Ile79.

It belongs to the ATPase C chain family. F-type ATPases have 2 components, F(1) - the catalytic core - and F(0) - the membrane proton channel. F(1) has five subunits: alpha(3), beta(3), gamma(1), delta(1), epsilon(1). F(0) has three main subunits: a(1), b(2) and c(10-14). The alpha and beta chains form an alternating ring which encloses part of the gamma chain. F(1) is attached to F(0) by a central stalk formed by the gamma and epsilon chains, while a peripheral stalk is formed by the delta and b chains.

It is found in the cell membrane. Its function is as follows. F(1)F(0) ATP synthase produces ATP from ADP in the presence of a proton or sodium gradient. F-type ATPases consist of two structural domains, F(1) containing the extramembraneous catalytic core and F(0) containing the membrane proton channel, linked together by a central stalk and a peripheral stalk. During catalysis, ATP synthesis in the catalytic domain of F(1) is coupled via a rotary mechanism of the central stalk subunits to proton translocation. Functionally, key component of the F(0) channel; it plays a direct role in translocation across the membrane. A homomeric c-ring of between 10-14 subunits forms the central stalk rotor element with the F(1) delta and epsilon subunits. This chain is ATP synthase subunit c, found in Buchnera aphidicola subsp. Baizongia pistaciae (strain Bp).